The primary structure comprises 1065 residues: N-terminal acetyltransferase B complex auxiliary subunit NAA25 (1065 aa).

Residues 294-327 (VDKLRIQGRLLARANDYSAAVDVYKKILELSPDD) form a TPR repeat.

It belongs to the MDM20/NAA25 family. As to expression, ubiquitously expressed, with a higher expression in vascular bundles, hydathodes, leaf primordia and the base of the trichomes.

It is found in the cytoplasm. In terms of biological role, auxiliary subunit of the NatB N-alpha-acetyltransferase complex. Required for flowering time regulation and for vegetative and reproductive plant development. This is N-terminal acetyltransferase B complex auxiliary subunit NAA25 from Arabidopsis thaliana (Mouse-ear cress).